Here is a 758-residue protein sequence, read N- to C-terminus: Probable TonB-dependent receptor NMB0964 (758 aa).

Positions 1–24 (MAQTTLKPIVLSILLINTPLLAQA) are cleaved as a signal peptide. The TBDR plug domain maps to 50–161 (LLHTSTASDK…VAGLVDVADG (112 aa)). Residues 171–758 (GVSGELGLRL…SFTGGVNVKF (588 aa)) form the TBDR beta-barrel domain. The TonB C-terminal box signature appears at 741–758 (SDTPQMGRSFTGGVNVKF).

Belongs to the TonB-dependent receptor family.

It localises to the cell outer membrane. Functionally, probable receptor, TonB-dependent. In Neisseria meningitidis serogroup B (strain ATCC BAA-335 / MC58), this protein is Probable TonB-dependent receptor NMB0964.